A 453-amino-acid polypeptide reads, in one-letter code: Tubulin beta-1 chain (453 aa).

GTP-binding residues include glutamine 12, glutamate 71, serine 140, glycine 144, threonine 145, glycine 146, asparagine 206, and asparagine 228. Glutamate 71 contributes to the Mg(2+) binding site. The segment at 431–453 is disordered; the sequence is TADGVEGYEEEGYENDHPEDDEE. The segment covering 436-453 has biased composition (acidic residues); the sequence is EGYEEEGYENDHPEDDEE.

Belongs to the tubulin family. In terms of assembly, dimer of alpha and beta chains. A typical microtubule is a hollow water-filled tube with an outer diameter of 25 nm and an inner diameter of 15 nM. Alpha-beta heterodimers associate head-to-tail to form protofilaments running lengthwise along the microtubule wall with the beta-tubulin subunit facing the microtubule plus end conferring a structural polarity. Microtubules usually have 13 protofilaments but different protofilament numbers can be found in some organisms and specialized cells. Requires Mg(2+) as cofactor.

It is found in the cytoplasm. The protein resides in the cytoskeleton. In terms of biological role, tubulin is the major constituent of microtubules, a cylinder consisting of laterally associated linear protofilaments composed of alpha- and beta-tubulin heterodimers. Microtubules grow by the addition of GTP-tubulin dimers to the microtubule end, where a stabilizing cap forms. Below the cap, tubulin dimers are in GDP-bound state, owing to GTPase activity of alpha-tubulin. The polypeptide is Tubulin beta-1 chain (TUBB) (Chondrus crispus (Carrageen Irish moss)).